The following is a 142-amino-acid chain: Galactose-6-phosphate isomerase subunit LacA (142 aa).

The protein belongs to the LacAB/RpiB family. In terms of assembly, heteromultimeric protein consisting of LacA and LacB.

It catalyses the reaction aldehydo-D-galactose 6-phosphate = keto-D-tagatose 6-phosphate. It participates in carbohydrate metabolism; D-galactose 6-phosphate degradation; D-tagatose 6-phosphate from D-galactose 6-phosphate: step 1/1. This Enterococcus faecalis (strain ATCC 700802 / V583) protein is Galactose-6-phosphate isomerase subunit LacA.